Consider the following 59-residue polypeptide: Large ribosomal subunit protein bL32 (59 aa).

This sequence belongs to the bacterial ribosomal protein bL32 family. As to quaternary structure, part of the 50S ribosomal subunit.

The protein is Large ribosomal subunit protein bL32 (rpmF) of Bacillus subtilis (strain 168).